The sequence spans 1069 residues: Carbamoyl phosphate synthase large chain (1069 aa).

The interval 1 to 401 (MPLNKDIKKV…AFLKGIRSLE (401 aa)) is carboxyphosphate synthetic domain. Residues arginine 129, arginine 169, glycine 175, glycine 176, lysine 208, valine 210, glutamate 215, glycine 241, isoleucine 242, histidine 243, glutamine 284, and glutamate 298 each coordinate ATP. Positions 133–327 (RDMMNRIGEP…IAKLAAKIAL (195 aa)) constitute an ATP-grasp 1 domain. Mg(2+)-binding residues include glutamine 284, glutamate 298, and asparagine 300. Mn(2+)-binding residues include glutamine 284, glutamate 298, and asparagine 300. An oligomerization domain region spans residues 402–549 (IGKYSLDHNK…YSTYEQYDEV (148 aa)). Residues 550–932 (EVSNNKKVIV…ALYKGFVGAY (383 aa)) form a carbamoyl phosphate synthetic domain region. The region spanning 674–864 (DELLERLGIS…IVDLATQVML (191 aa)) is the ATP-grasp 2 domain. Residues arginine 710, lysine 749, leucine 751, glutamate 755, glycine 780, valine 781, histidine 782, serine 783, glutamine 823, and glutamate 835 each coordinate ATP. Positions 823, 835, and 837 each coordinate Mg(2+). Residues glutamine 823, glutamate 835, and asparagine 837 each contribute to the Mn(2+) site. The 138-residue stretch at 932–1069 (YMYPSKEKGK…KDLEVFNIAK (138 aa)) folds into the MGS-like domain. Residues 933-1069 (MYPSKEKGKI…KDLEVFNIAK (137 aa)) are allosteric domain.

This sequence belongs to the CarB family. As to quaternary structure, composed of two chains; the small (or glutamine) chain promotes the hydrolysis of glutamine to ammonia, which is used by the large (or ammonia) chain to synthesize carbamoyl phosphate. Tetramer of heterodimers (alpha,beta)4. Mg(2+) serves as cofactor. It depends on Mn(2+) as a cofactor.

The catalysed reaction is hydrogencarbonate + L-glutamine + 2 ATP + H2O = carbamoyl phosphate + L-glutamate + 2 ADP + phosphate + 2 H(+). It carries out the reaction hydrogencarbonate + NH4(+) + 2 ATP = carbamoyl phosphate + 2 ADP + phosphate + 2 H(+). Its pathway is amino-acid biosynthesis; L-arginine biosynthesis; carbamoyl phosphate from bicarbonate: step 1/1. It participates in pyrimidine metabolism; UMP biosynthesis via de novo pathway; (S)-dihydroorotate from bicarbonate: step 1/3. Large subunit of the glutamine-dependent carbamoyl phosphate synthetase (CPSase). CPSase catalyzes the formation of carbamoyl phosphate from the ammonia moiety of glutamine, carbonate, and phosphate donated by ATP, constituting the first step of 2 biosynthetic pathways, one leading to arginine and/or urea and the other to pyrimidine nucleotides. The large subunit (synthetase) binds the substrates ammonia (free or transferred from glutamine from the small subunit), hydrogencarbonate and ATP and carries out an ATP-coupled ligase reaction, activating hydrogencarbonate by forming carboxy phosphate which reacts with ammonia to form carbamoyl phosphate. The sequence is that of Carbamoyl phosphate synthase large chain from Clostridium beijerinckii (strain ATCC 51743 / NCIMB 8052) (Clostridium acetobutylicum).